We begin with the raw amino-acid sequence, 757 residues long: Cellulose synthase-like protein B5 (757 aa).

2 consecutive transmembrane segments (helical) span residues 24 to 44 (AVDL…ILHI) and 50 to 70 (VWLL…IFTC). Active-site residues include aspartate 136 and aspartate 460. Helical transmembrane passes span 531-551 (LAYF…YCLL), 572-592 (IVTL…SLGF), 613-633 (LFSI…GFVI), 671-691 (LFIP…GYLV), 704-724 (GSGL…LPFL), and 735-755 (IPLS…FFCV).

It belongs to the glycosyltransferase 2 family. Plant cellulose synthase-like B subfamily. Expressed in young seedlings, primarily in the vascular tissue. Expressed in the root cap.

The protein resides in the golgi apparatus membrane. Its function is as follows. Thought to be a Golgi-localized beta-glycan synthase that polymerize the backbones of noncellulosic polysaccharides (hemicelluloses) of plant cell wall. This Arabidopsis thaliana (Mouse-ear cress) protein is Cellulose synthase-like protein B5 (CSLB5).